The primary structure comprises 86 residues: Large ribosomal subunit protein bL31B (86 aa).

The protein belongs to the bacterial ribosomal protein bL31 family. Type B subfamily. In terms of assembly, part of the 50S ribosomal subunit.

In Streptococcus agalactiae serotype Ia (strain ATCC 27591 / A909 / CDC SS700), this protein is Large ribosomal subunit protein bL31B.